The chain runs to 441 residues: GTPase Der (441 aa).

2 consecutive EngA-type G domains span residues serine 4–alanine 169 and proline 178–asparagine 353. GTP-binding positions include glycine 10–serine 17, aspartate 57–isoleucine 61, asparagine 120–aspartate 123, glycine 184–serine 191, aspartate 231–leucine 235, and asparagine 296–aspartate 299. A KH-like domain is found at leucine 354 to lysine 438.

Belongs to the TRAFAC class TrmE-Era-EngA-EngB-Septin-like GTPase superfamily. EngA (Der) GTPase family. Associates with the 50S ribosomal subunit.

Its function is as follows. GTPase that plays an essential role in the late steps of ribosome biogenesis. The chain is GTPase Der from Lachnoclostridium phytofermentans (strain ATCC 700394 / DSM 18823 / ISDg) (Clostridium phytofermentans).